Consider the following 140-residue polypeptide: Flagellar assembly factor FliW (140 aa).

It belongs to the FliW family. Interacts with translational regulator CsrA and flagellin(s).

Its subcellular location is the cytoplasm. Functionally, acts as an anti-CsrA protein, binds CsrA and prevents it from repressing translation of its target genes, one of which is flagellin. Binds to flagellin and participates in the assembly of the flagellum. The protein is Flagellar assembly factor FliW of Syntrophotalea carbinolica (strain DSM 2380 / NBRC 103641 / GraBd1) (Pelobacter carbinolicus).